The primary structure comprises 379 residues: tRNA(Met) cytidine acetate ligase (379 aa).

ATP contacts are provided by residues 7-20, Gly100, Asn153, and Arg178; that span reads ITEY…HQYH.

It belongs to the TmcAL family.

Its subcellular location is the cytoplasm. It carries out the reaction cytidine(34) in elongator tRNA(Met) + acetate + ATP = N(4)-acetylcytidine(34) in elongator tRNA(Met) + AMP + diphosphate. Functionally, catalyzes the formation of N(4)-acetylcytidine (ac(4)C) at the wobble position of elongator tRNA(Met), using acetate and ATP as substrates. First activates an acetate ion to form acetyladenylate (Ac-AMP) and then transfers the acetyl group to tRNA to form ac(4)C34. The polypeptide is tRNA(Met) cytidine acetate ligase (Staphylococcus aureus (strain Mu3 / ATCC 700698)).